A 221-amino-acid chain; its full sequence is Translation initiation factor 6 (221 aa).

It belongs to the eIF-6 family.

Binds to the 50S ribosomal subunit and prevents its association with the 30S ribosomal subunit to form the 70S initiation complex. This chain is Translation initiation factor 6, found in Methanospirillum hungatei JF-1 (strain ATCC 27890 / DSM 864 / NBRC 100397 / JF-1).